The following is a 727-amino-acid chain: Probable metal-nicotianamine transporter YSL14 (727 aa).

Low complexity-rich tracts occupy residues 1–10 and 18–27; these read MAQHTAAAAG and AEAAAAAAAG. A disordered region spans residues 1–61; the sequence is MAQHTAAAAG…RNGGADDPDA (61 aa). The segment covering 45–54 has biased composition (gly residues); the sequence is AGGGGGGRNG. Helical transmembrane passes span 84–104, 107–127, 152–172, 194–214, 256–276, 314–334, 359–379, 432–452, 460–480, 492–512, 546–566, 604–624, 646–666, and 681–701; these read AFVV…KLNL, GIIP…VRLW, CVVS…LFGM, LGWM…ALVP, LGKY…YTAG, IVNV…WPLI, VFIS…KVLI, VAYG…PEIF, ILVA…GSGL, LAIF…LVGL, FISQ…VFWL, PENC…INLI, FYIG…LFVW, and VASG…ILAL.

Belongs to the YSL (TC 2.A.67.2) family. As to expression, expressed in leaves and at low levels in roots.

Its subcellular location is the membrane. In terms of biological role, may be involved in the transport of nicotianamine-chelated metals. In Oryza sativa subsp. japonica (Rice), this protein is Probable metal-nicotianamine transporter YSL14 (YSL14).